Reading from the N-terminus, the 552-residue chain is MKKNRERFSSKEREFVYKFQIGSERLELRVPLRFPVDENASHLHGRLMLLHSLPCFIENDLKEALARFIEEESLRDHDSDAEACLEAVKSGEVDLHQLASTWAKAYAETTLEHARPEEPNWDEDFADVYHDLIHSPASETLLNLEHNYFVSISELIGERDVELKKLRERQGIEMEKVMQELGKSLTDQDVNSLAAQHFESQQDLENKWSNELKQSTAIQKQEYQEWVIKLHQDLKNPNNSSLSEEIKVQPSQFRESADAAGRIYEEQRKLEESFTIHLGAQLKTMHNLRLLRADMLDFCKHKRTQGSGVKLHRLQTALSLYSTSLCGLVLLVDNRINSYSGIKRDFATVCQECTDFHFPRIEEQLEVVQQVALYARTQRRSKCKEARDSGNQNGGSDEKSKNAERNYLNILPGEFYITRHSNLSEIHVAFHLCVDDNVKSGNITARDPAIMGLRNILKVCCTHDITTISIPLLLVHDMSEEMTIPWCLRRAELVFKCVKGFMMEMASWDGGISRTVQFLVPQSISEEMFYQLSNMLPQIFRVSSTLTLTSKH.

The residue at position 79 (Ser79) is a Phosphoserine.

As to quaternary structure, component of the FERRY complex composed of five subunits, TBCK, PPP1R21, FERRY3, CRYZL1 and GATD1 with a ratio of 1:2:1:2:4, respectively.

Its subcellular location is the cytoplasm. The protein localises to the early endosome. Component of the FERRY complex (Five-subunit Endosomal Rab5 and RNA/ribosome intermediary). The FERRY complex directly interacts with mRNAs and RAB5A, and functions as a RAB5A effector involved in the localization and the distribution of specific mRNAs most likely by mediating their endosomal transport. The complex recruits mRNAs and ribosomes to early endosomes through direct mRNA-interaction. Plays a role in mast cell degranulation. The protein is FERRY endosomal RAB5 effector complex subunit 3 of Rattus norvegicus (Rat).